Reading from the N-terminus, the 313-residue chain is DNA-directed RNA polymerase subunit alpha (313 aa).

An alpha N-terminal domain (alpha-NTD) region spans residues 1–227 (MMLDVAPPRF…DFFGLFAEGY (227 aa)). The alpha C-terminal domain (alpha-CTD) stretch occupies residues 242–313 (RPVITDERPI…YGYTLESGRE (72 aa)).

Belongs to the RNA polymerase alpha chain family. In terms of assembly, homodimer. The RNAP catalytic core consists of 2 alpha, 1 beta, 1 beta' and 1 omega subunit. When a sigma factor is associated with the core the holoenzyme is formed, which can initiate transcription.

It carries out the reaction RNA(n) + a ribonucleoside 5'-triphosphate = RNA(n+1) + diphosphate. In terms of biological role, DNA-dependent RNA polymerase catalyzes the transcription of DNA into RNA using the four ribonucleoside triphosphates as substrates. The chain is DNA-directed RNA polymerase subunit alpha from Rubrobacter xylanophilus (strain DSM 9941 / JCM 11954 / NBRC 16129 / PRD-1).